A 479-amino-acid polypeptide reads, in one-letter code: Sulfate adenylyltransferase subunit 1 (479 aa).

The region spanning 25–239 (KSLLRFLTCG…EVLETVDIQR (215 aa)) is the tr-type G domain. The G1 stretch occupies residues 34 to 41 (GSVDDGKS). 34–41 (GSVDDGKS) provides a ligand contact to GTP. The tract at residues 92-96 (GITID) is G2. The tract at residues 113-116 (DTPG) is G3. GTP-binding positions include 113–117 (DTPGH) and 168–171 (NKMD). The segment at 168 to 171 (NKMD) is G4. A G5 region spans residues 206–208 (SAL).

This sequence belongs to the TRAFAC class translation factor GTPase superfamily. Classic translation factor GTPase family. CysN/NodQ subfamily. Heterodimer composed of CysD, the smaller subunit, and CysN.

It catalyses the reaction sulfate + ATP + H(+) = adenosine 5'-phosphosulfate + diphosphate. It functions in the pathway sulfur metabolism; hydrogen sulfide biosynthesis; sulfite from sulfate: step 1/3. Its function is as follows. With CysD forms the ATP sulfurylase (ATPS) that catalyzes the adenylation of sulfate producing adenosine 5'-phosphosulfate (APS) and diphosphate, the first enzymatic step in sulfur assimilation pathway. APS synthesis involves the formation of a high-energy phosphoric-sulfuric acid anhydride bond driven by GTP hydrolysis by CysN coupled to ATP hydrolysis by CysD. The polypeptide is Sulfate adenylyltransferase subunit 1 (Salmonella paratyphi B (strain ATCC BAA-1250 / SPB7)).